Reading from the N-terminus, the 376-residue chain is MAYTTFSQTKNDQLKEPMFFGQPVNVARYDQQKYDIFEKLIEKQLSFFWRPEEVDVSRDRIDYQALPEHEKHIFISNLKYQTLLDSIQGRSPNVALLPLISIPELETWVETWAFSETIHSRSYTHIIRNIVNDPSVVFDDIVTNEQIQKRAEGISSYYDELIEMTSYWHLLGEGTHTVNGKTVTVSLRELKKKLYLCLMSVNALEAIRFYVSFACSFAFAERELMEGNAKIIRLIARDEALHLTGTQHMLNLLRSGADDPEMAEIAEECKQECYDLFVQAAQQEKDWADYLFRDGSMIGLNKDILCQYVEYITNIRMQAVGLDLPFQTRSNPIPWINTWLVSDNVQVAPQEVEVSSYLVGQIDSEVDTDDLSNFQL.

Fe cation-binding residues include D85, E116, and H119. The active site involves Y123. Residues E205, E239, and H242 each coordinate Fe cation.

This sequence belongs to the ribonucleoside diphosphate reductase small chain family. As to quaternary structure, tetramer of two alpha (R1) and two beta (R2) subunits. The B1 protein is a dimer of alpha subunits. A radical transfer pathway occurs between Tyr-123 of R2 and R1. It depends on Fe cation as a cofactor.

The enzyme catalyses a 2'-deoxyribonucleoside 5'-diphosphate + [thioredoxin]-disulfide + H2O = a ribonucleoside 5'-diphosphate + [thioredoxin]-dithiol. Functionally, provides the precursors necessary for DNA synthesis. Catalyzes the biosynthesis of deoxyribonucleotides from the corresponding ribonucleotides. R2 contains the tyrosyl radical required for catalysis. The chain is Ribonucleoside-diphosphate reductase 1 subunit beta (nrdB) from Escherichia coli O157:H7.